Consider the following 71-residue polypeptide: Small ribosomal subunit protein bS21 (71 aa).

The disordered stretch occupies residues 40 to 71; that stretch reads KPTQERKRKAAAAVKRNIRRTSRDVTKRKRLY. Basic residues predominate over residues 45–71; that stretch reads RKRKAAAAVKRNIRRTSRDVTKRKRLY.

It belongs to the bacterial ribosomal protein bS21 family.

The protein is Small ribosomal subunit protein bS21 of Xylella fastidiosa (strain M23).